The primary structure comprises 148 residues: Large ribosomal subunit protein bL9 (148 aa).

It belongs to the bacterial ribosomal protein bL9 family.

Its function is as follows. Binds to the 23S rRNA. This Listeria monocytogenes serotype 4b (strain CLIP80459) protein is Large ribosomal subunit protein bL9.